A 178-amino-acid polypeptide reads, in one-letter code: MEQYHGTTIVSVRRGNQVALGGDGQVTLGNIVMKGTARKVRRIYNGKVLVGFAGSTADAFSLLDRFEAKLEKYQGNLTRAAVDLAKDWRSDRALRRLEAMLITADRETTLVITGNGDVLDPEGGIAAIGSGGAYAQSAAKALVENTELAPRDVVEKALTIAGELCIYTNTNFVIETLE.

The active site involves threonine 7. The Na(+) site is built by glycine 162, cysteine 165, and threonine 168.

The protein belongs to the peptidase T1B family. HslV subfamily. As to quaternary structure, a double ring-shaped homohexamer of HslV is capped on each side by a ring-shaped HslU homohexamer. The assembly of the HslU/HslV complex is dependent on binding of ATP.

The protein resides in the cytoplasm. It catalyses the reaction ATP-dependent cleavage of peptide bonds with broad specificity.. With respect to regulation, allosterically activated by HslU binding. Protease subunit of a proteasome-like degradation complex believed to be a general protein degrading machinery. The protein is ATP-dependent protease subunit HslV of Cupriavidus pinatubonensis (strain JMP 134 / LMG 1197) (Cupriavidus necator (strain JMP 134)).